Here is a 463-residue protein sequence, read N- to C-terminus: Homoserine O-acetyltransferase FUB5 (463 aa).

Positions 113–436 (NVMIICHALS…VSDDGHDAFL (324 aa)) constitute an AB hydrolase-1 domain. The Nucleophile role is filled by Ser211. Residues 296 to 312 (RFGRDTGSKKKTQKQES) are compositionally biased toward basic and acidic residues. Positions 296–331 (RFGRDTGSKKKTQKQESKTLPSNSTPIHSHSGADET) are disordered. Catalysis depends on residues Asp403 and His432.

This sequence belongs to the AB hydrolase superfamily. MetX family.

It catalyses the reaction L-homoserine + acetyl-CoA = O-acetyl-L-homoserine + CoA. The protein operates within mycotoxin biosynthesis. Functionally, homoserine O-acetyltransferase; part of the gene cluster that mediates the biosynthesis of fusaric acid, a mycotoxin with low to moderate toxicity to animals and humans, but with high phytotoxic properties. L-aspartate is suggested as fusaric acid amino acid precursor that is activated and further processed to O-acetyl-L-homoserine by cluster enzymes aspartate kinase FUB3 and homoserine O-acetyltransferase FUB5, as well as enzymes of the primary metabolism. The polyketide synthase (PKS) FUB1 generates the triketide trans-2-hexenal which is presumptively released by the hydrolase FUB4 and linked to the NRPS-bound amino acid precursor by NAD(P)-dependent dehydrogenase FUB6. FUB1, FUB4, and the non-canonical NRPS Fub8 may form an enzyme complex. Further processing of the NRPS-bound intermediate might be carried out by FUB6 and the sulfhydrylase FUB7, enabling a spontaneous electrocyclization to close the carbon backbone of fusaric acid. Dihydrofusaric acid is likely to be released via reduction by the thioester reductase (TR) domain of FUB8 whereupon the final oxidation to fusaric acid may (also) be performed by the FMN-dependent dehydrogenase FUB9. The protein is Homoserine O-acetyltransferase FUB5 of Gibberella moniliformis (strain M3125 / FGSC 7600) (Maize ear and stalk rot fungus).